Consider the following 737-residue polypeptide: Probable serine/threonine-protein kinase DDB_G0269628 (737 aa).

Positions 8-488 (YKLIKDLRSG…TLQKMDTSLL (481 aa)) constitute a Protein kinase domain. ATP is bound by residues 14-22 (LRSGGEGKA) and K36. 2 disordered regions span residues 155 to 251 (NTIQ…KKCS) and 278 to 298 (TTAA…SSSN). A compositionally biased stretch (polar residues) spans 156 to 167 (TIQHSHSSSSLV). Residues 168 to 229 (NGTTSPTNAT…PSSPSSPLSP (62 aa)) show a composition bias toward low complexity. Residue D349 is the Proton acceptor of the active site.

The protein belongs to the protein kinase superfamily. NEK Ser/Thr protein kinase family. NIMA subfamily.

The catalysed reaction is L-seryl-[protein] + ATP = O-phospho-L-seryl-[protein] + ADP + H(+). It catalyses the reaction L-threonyl-[protein] + ATP = O-phospho-L-threonyl-[protein] + ADP + H(+). This is Probable serine/threonine-protein kinase DDB_G0269628 from Dictyostelium discoideum (Social amoeba).